The primary structure comprises 281 residues: NADPH-dependent 7-cyano-7-deazaguanine reductase (281 aa).

Residue 81-83 participates in substrate binding; that stretch reads VES. Residue 83–84 participates in NADPH binding; sequence SK. The active-site Thioimide intermediate is the C188. D195 functions as the Proton donor in the catalytic mechanism. 227–228 is a binding site for substrate; the sequence is HE. 256–257 serves as a coordination point for NADPH; sequence RG. Positions 261 to 281 are disordered; it reads INPLRTSHPQGLPRNMRTARQ.

This sequence belongs to the GTP cyclohydrolase I family. QueF type 2 subfamily. In terms of assembly, homodimer.

Its subcellular location is the cytoplasm. It catalyses the reaction 7-aminomethyl-7-carbaguanine + 2 NADP(+) = 7-cyano-7-deazaguanine + 2 NADPH + 3 H(+). The protein operates within tRNA modification; tRNA-queuosine biosynthesis. Catalyzes the NADPH-dependent reduction of 7-cyano-7-deazaguanine (preQ0) to 7-aminomethyl-7-deazaguanine (preQ1). The polypeptide is NADPH-dependent 7-cyano-7-deazaguanine reductase (Verminephrobacter eiseniae (strain EF01-2)).